A 142-amino-acid chain; its full sequence is Small ribosomal subunit protein uS9 (142 aa).

The protein belongs to the universal ribosomal protein uS9 family.

This is Small ribosomal subunit protein uS9 (RPS16) from Debaryomyces hansenii (strain ATCC 36239 / CBS 767 / BCRC 21394 / JCM 1990 / NBRC 0083 / IGC 2968) (Yeast).